The chain runs to 457 residues: uncharacterized protein (457 aa).

The next 14 helical transmembrane spans lie at 15–35 (YGAI…GAIA), 54–74 (IWVV…FSFL), 87–107 (GLVV…LQML), 112–132 (VIQG…IRLI), 144–164 (INSF…AAIL), 166–186 (IASW…ALLL), 205–225 (LPSA…LSGF), 229–249 (QSLT…IFFI), 269–289 (LFSL…LAMV), 308–328 (LLLT…GYLI), 334–354 (GLLG…LVLL), 357–377 (SPAD…FGLF), 400–420 (MLGT…ALML), and 428–448 (THVS…VSGL).

This sequence belongs to the major facilitator superfamily. TCR/Tet family.

It localises to the cell inner membrane. This is an uncharacterized protein from Escherichia coli (strain K12).